The sequence spans 150 residues: Urease accessory protein UreE (150 aa).

The protein belongs to the UreE family.

The protein localises to the cytoplasm. In terms of biological role, involved in urease metallocenter assembly. Binds nickel. Probably functions as a nickel donor during metallocenter assembly. This chain is Urease accessory protein UreE, found in Staphylococcus epidermidis (strain ATCC 35984 / DSM 28319 / BCRC 17069 / CCUG 31568 / BM 3577 / RP62A).